The primary structure comprises 144 residues: Cystatin-F (144 aa).

An N-terminal signal peptide occupies residues Met1–Gly18. N-linked (GlcNAc...) asparagine glycosylation is present at Asn61. Residues Gln80–Gly84 carry the Secondary area of contact motif. Disulfide bonds link Cys98/Cys109 and Cys123/Cys143.

It belongs to the cystatin family.

It is found in the secreted. In terms of biological role, inhibits papain and cathepsin L but with affinities lower than other cystatins. May play a role in immune regulation through inhibition of a unique target in the hematopoietic system. This chain is Cystatin-F (Cst7), found in Mus musculus (Mouse).